The primary structure comprises 910 residues: Disease susceptibility protein LOV1 (910 aa).

Residues Ala22–Asn60 adopt a coiled-coil conformation. An NB-ARC domain is found at Glu169–Asp461. LRR repeat units lie at residues Leu584–Leu609, Ile610–Leu632, Leu634–Met655, Met700–Leu725, Arg726–Asn751, and Met847–Thr871.

The protein belongs to the disease resistance NB-LRR family. RPP8/HRT subfamily.

Functionally, confers susceptibility to the fungus Cochliobolus victoriae by conditioning victorin-dependent (victorin is a toxin synthesized by C.victoriae) induction of defense-associated proteins. This chain is Disease susceptibility protein LOV1 (LOV1), found in Arabidopsis thaliana (Mouse-ear cress).